The chain runs to 400 residues: Putative cytochrome P450 141 (400 aa).

2 helical membrane passes run 225-245 (VVGM…AVIT) and 294-314 (VVIA…ITSA). Residue Cys-346 coordinates heme.

This sequence belongs to the cytochrome P450 family. The cofactor is heme.

It is found in the cell membrane. The chain is Putative cytochrome P450 141 (cyp141) from Mycobacterium tuberculosis (strain CDC 1551 / Oshkosh).